The sequence spans 393 residues: Formate-dependent phosphoribosylglycinamide formyltransferase (393 aa).

Residues 22–23 (EL) and glutamate 82 each bind N(1)-(5-phospho-beta-D-ribosyl)glycinamide. ATP contacts are provided by residues arginine 114, lysine 155, 160–165 (SSGKGQ), 195–198 (EGFI), and glutamate 203. An ATP-grasp domain is found at 119–308 (RLAAEELKLP…QFALHARAIL (190 aa)). 2 residues coordinate Mg(2+): glutamate 267 and glutamate 279. Residues aspartate 286, lysine 356, and 363-364 (RR) contribute to the N(1)-(5-phospho-beta-D-ribosyl)glycinamide site.

It belongs to the PurK/PurT family. Homodimer.

The catalysed reaction is N(1)-(5-phospho-beta-D-ribosyl)glycinamide + formate + ATP = N(2)-formyl-N(1)-(5-phospho-beta-D-ribosyl)glycinamide + ADP + phosphate + H(+). The protein operates within purine metabolism; IMP biosynthesis via de novo pathway; N(2)-formyl-N(1)-(5-phospho-D-ribosyl)glycinamide from N(1)-(5-phospho-D-ribosyl)glycinamide (formate route): step 1/1. Its function is as follows. Involved in the de novo purine biosynthesis. Catalyzes the transfer of formate to 5-phospho-ribosyl-glycinamide (GAR), producing 5-phospho-ribosyl-N-formylglycinamide (FGAR). Formate is provided by PurU via hydrolysis of 10-formyl-tetrahydrofolate. The sequence is that of Formate-dependent phosphoribosylglycinamide formyltransferase from Pseudomonas syringae pv. tomato (strain ATCC BAA-871 / DC3000).